A 514-amino-acid chain; its full sequence is Putative thymidine phosphorylase (514 aa).

The protein belongs to the thymidine/pyrimidine-nucleoside phosphorylase family. Type 2 subfamily.

It catalyses the reaction thymidine + phosphate = 2-deoxy-alpha-D-ribose 1-phosphate + thymine. The sequence is that of Putative thymidine phosphorylase from Rhodopseudomonas palustris (strain ATCC BAA-98 / CGA009).